A 103-amino-acid chain; its full sequence is c-Myc-binding protein (103 aa).

Belongs to the AMY1 family. In terms of assembly, binds via its C-terminal region to the N-terminal region of MYC. Associates with AKAP1/S-AKAP84. Interacts with MYCBPAP. Interacts with CFAP91.

It is found in the cytoplasm. The protein resides in the nucleus. May control the transcriptional activity of MYC. Stimulates the activation of E box-dependent transcription by MYC. This Pongo abelii (Sumatran orangutan) protein is c-Myc-binding protein (MYCBP).